Here is a 160-residue protein sequence, read N- to C-terminus: NADH-quinone oxidoreductase subunit B (160 aa).

4 residues coordinate [4Fe-4S] cluster: cysteine 37, cysteine 38, cysteine 102, and cysteine 132.

It belongs to the complex I 20 kDa subunit family. NDH-1 is composed of 14 different subunits. Subunits NuoB, C, D, E, F, and G constitute the peripheral sector of the complex. It depends on [4Fe-4S] cluster as a cofactor.

Its subcellular location is the cell inner membrane. The catalysed reaction is a quinone + NADH + 5 H(+)(in) = a quinol + NAD(+) + 4 H(+)(out). Its function is as follows. NDH-1 shuttles electrons from NADH, via FMN and iron-sulfur (Fe-S) centers, to quinones in the respiratory chain. Couples the redox reaction to proton translocation (for every two electrons transferred, four hydrogen ions are translocated across the cytoplasmic membrane), and thus conserves the redox energy in a proton gradient. This is NADH-quinone oxidoreductase subunit B from Neisseria gonorrhoeae (strain ATCC 700825 / FA 1090).